The chain runs to 64 residues: DNA-binding protein 7b (64 aa).

It belongs to the 7 kDa DNA-binding/endoribonuclease P2 family. In terms of assembly, monomer.

It is found in the cytoplasm. Functionally, can constrain negative DNA supercoils. May be involved in maintaining the integrity of the genome at high temperature. The sequence is that of DNA-binding protein 7b from Saccharolobus islandicus (strain HVE10/4) (Sulfolobus islandicus).